Here is a 572-residue protein sequence, read N- to C-terminus: Mitochondrial chaperone TCM62 (572 aa).

Residues 1–16 (MLRNCLRKLGNHQTKC) constitute a mitochondrion transit peptide. The Mitochondrial matrix segment spans residues 17 to 471 (SVKTLHTPIY…KANEPNFMTK (455 aa)). The helical transmembrane segment at 472-488 (VGINAVLSAVILPSEVA) threads the bilayer. Residues 489-572 (FKNAYGYNYY…VYKKPERHKA (84 aa)) lie on the Mitochondrial intermembrane side of the membrane.

This sequence belongs to the chaperonin (HSP60) family. In terms of assembly, forms a high molecular mass protein complex of approximately 850 kDa.

It localises to the mitochondrion inner membrane. Chaperone. Required for the assembly of succinate dehydrogenase subunits. Ensures mitochondrial gene expression at elevated temperatures and prevents heat-aggregation of the ribosomal subunit VAR1. This is Mitochondrial chaperone TCM62 (TCM62) from Saccharomyces cerevisiae (strain YJM789) (Baker's yeast).